The chain runs to 256 residues: Small ribosomal subunit protein eS1 (256 aa).

The segment covering Met1–Lys18 has biased composition (basic residues). Residues Met1–Thr20 form a disordered region. An N-acetylalanine; partial modification is found at Ala2.

This sequence belongs to the eukaryotic ribosomal protein eS1 family. As to quaternary structure, component of the small ribosomal subunit. Mature ribosomes consist of a small (40S) and a large (60S) subunit. The 40S subunit contains about 33 different proteins and 1 molecule of RNA (18S). The 60S subunit contains about 49 different proteins and 3 molecules of RNA (25S, 5.8S and 5S).

It localises to the cytoplasm. The polypeptide is Small ribosomal subunit protein eS1 (rps1) (Aspergillus flavus (strain ATCC 200026 / FGSC A1120 / IAM 13836 / NRRL 3357 / JCM 12722 / SRRC 167)).